Here is a 396-residue protein sequence, read N- to C-terminus: MAAAVDTFLFTSESVNEGHPDKLCDQISDAVLDACLAQDPESKVACETCTKTNLVMVFGEITTKADVDYEKIVRQTCRDIGFVSADVGLDADNCKVLVYIEQQSPDIAQGVHGHLSRRPEEIGAGDQGHMFGYASDETPELMPLSHVLATKLGARLTEVRKNGTCPWLRPDGKTQVTVEYYNENGAMVPIRVHTVLISTQHDETVTNDEIAADLKEHVIKPVIPEKYLDEKTIFHLNPSGRFVIGGPHGDAGLTGRKIIIDTYGGWGAHGGGAFSGKDPTKVDRSGAYIARQAAKSIVAAGLARRCIVQISYAIGVPEPLSVFVDTYGTGKIPDKEILKIVKETFDFRPGMIAINLDLLKGGSRYLKTAAYGHFGRDDADFTWETVKPLKWEKPQA.

Glu13 provides a ligand contact to Mg(2+). His19 is a binding site for ATP. Residue Glu47 coordinates K(+). The L-methionine site is built by Glu60 and Gln103. Residues 171 to 173 (DGK), 239 to 242 (SGRF), Asp250, 256 to 257 (RK), Ala273, Lys277, and Lys281 contribute to the ATP site. An L-methionine-binding site is contributed by Asp250. Lys281 is a binding site for L-methionine.

This sequence belongs to the AdoMet synthase family. As to quaternary structure, homotetramer. The cofactor is Mn(2+). It depends on Mg(2+) as a cofactor. Co(2+) is required as a cofactor. K(+) serves as cofactor. In terms of tissue distribution, expressed in roots, stems and leaves (at protein level).

Its subcellular location is the cytoplasm. The catalysed reaction is L-methionine + ATP + H2O = S-adenosyl-L-methionine + phosphate + diphosphate. It participates in amino-acid biosynthesis; S-adenosyl-L-methionine biosynthesis; S-adenosyl-L-methionine from L-methionine: step 1/1. Its function is as follows. Catalyzes the formation of S-adenosylmethionine from methionine and ATP. The reaction comprises two steps that are both catalyzed by the same enzyme: formation of S-adenosylmethionine (AdoMet) and triphosphate, and subsequent hydrolysis of the triphosphate. May be involved in the synthesis of betain in response to abiotic stress such as high salinity. This is S-adenosylmethionine synthase 2 (SAMS2) from Atriplex nummularia (Old man saltbush).